Reading from the N-terminus, the 511-residue chain is Exodeoxyribonuclease 7 large subunit (511 aa).

This sequence belongs to the XseA family. As to quaternary structure, heterooligomer composed of large and small subunits.

The protein resides in the cytoplasm. The catalysed reaction is Exonucleolytic cleavage in either 5'- to 3'- or 3'- to 5'-direction to yield nucleoside 5'-phosphates.. Its function is as follows. Bidirectionally degrades single-stranded DNA into large acid-insoluble oligonucleotides, which are then degraded further into small acid-soluble oligonucleotides. This chain is Exodeoxyribonuclease 7 large subunit, found in Brucella suis biovar 1 (strain 1330).